The sequence spans 176 residues: Immunity factor for TNT homolog (176 aa).

As to quaternary structure, interacts with the tuberculosis necrotizing toxin (TNT) homolog, the C-terminal domain of the outer membrane channel protein CpnT.

Its function is as follows. Antitoxin for tuberculosis necrotizing toxin (TNT) homolog. Acts by binding directly to TNT, which inhibits NAD(+) glycohydrolase activity of TNT and protects M.bovis from self-poisoning. The protein is Immunity factor for TNT homolog of Mycobacterium bovis (strain BCG / Pasteur 1173P2).